A 371-amino-acid chain; its full sequence is tRNA (guanine(26)-N(2))-dimethyltransferase (371 aa).

The Trm1 methyltransferase domain occupies 4-368; sequence VEVTEGRTRF…APLPVLEKVV (365 aa). S-adenosyl-L-methionine-binding residues include Arg-41, Arg-66, Asp-82, Asp-108, and Ala-109. The Zn(2+) site is built by Cys-237, Cys-240, Cys-256, and Cys-259.

This sequence belongs to the class I-like SAM-binding methyltransferase superfamily. Trm1 family.

The catalysed reaction is guanosine(26) in tRNA + 2 S-adenosyl-L-methionine = N(2)-dimethylguanosine(26) in tRNA + 2 S-adenosyl-L-homocysteine + 2 H(+). In terms of biological role, dimethylates a single guanine residue at position 26 of a number of tRNAs using S-adenosyl-L-methionine as donor of the methyl groups. The sequence is that of tRNA (guanine(26)-N(2))-dimethyltransferase from Methanoculleus marisnigri (strain ATCC 35101 / DSM 1498 / JR1).